Reading from the N-terminus, the 64-residue chain is Large ribosomal subunit protein bL35 (64 aa).

Belongs to the bacterial ribosomal protein bL35 family.

In Aliivibrio fischeri (strain ATCC 700601 / ES114) (Vibrio fischeri), this protein is Large ribosomal subunit protein bL35.